The primary structure comprises 644 residues: Exoribonuclease 2 (644 aa).

One can recognise an RNB domain in the interval 189–516 (REDLTALDFV…NHRLLKAVIK (328 aa)). One can recognise an S1 motif domain in the interval 561 to 643 (DTRFAAEIVD…ETRSIIARPV (83 aa)).

It belongs to the RNR ribonuclease family. RNase II subfamily.

It is found in the cytoplasm. It catalyses the reaction Exonucleolytic cleavage in the 3'- to 5'-direction to yield nucleoside 5'-phosphates.. Functionally, involved in mRNA degradation. Hydrolyzes single-stranded polyribonucleotides processively in the 3' to 5' direction. This Escherichia coli O8 (strain IAI1) protein is Exoribonuclease 2.